The chain runs to 212 residues: MNSQQCVIIAIAGASASGKSLIAKTIFDELRRDLGTDQIGVINEDAYYRDQSHLSMDERVLTNYDHPKALDHQLLCTHLQLLKSGEAVDIPCYSYTEHTRIAETLTMTPKKVIILEGILLLTDPKLRALMDASVFMDTPLDICFLRRLTRDVAERGRTMESVISQYKKTVRPMFLQFIEPSKQYADIIVPRGGKNRIATDILKTRIQHLLAK.

13–20 (GASASGKS) provides a ligand contact to ATP.

It belongs to the uridine kinase family.

It is found in the cytoplasm. It carries out the reaction uridine + ATP = UMP + ADP + H(+). The enzyme catalyses cytidine + ATP = CMP + ADP + H(+). It participates in pyrimidine metabolism; CTP biosynthesis via salvage pathway; CTP from cytidine: step 1/3. The protein operates within pyrimidine metabolism; UMP biosynthesis via salvage pathway; UMP from uridine: step 1/1. This chain is Uridine kinase, found in Shewanella baltica (strain OS223).